The sequence spans 113 residues: Holo-[acyl-carrier-protein] synthase (113 aa).

Mg(2+) is bound by residues Asp5 and Glu50.

This sequence belongs to the P-Pant transferase superfamily. AcpS family. It depends on Mg(2+) as a cofactor.

The protein localises to the cytoplasm. It carries out the reaction apo-[ACP] + CoA = holo-[ACP] + adenosine 3',5'-bisphosphate + H(+). Functionally, transfers the 4'-phosphopantetheine moiety from coenzyme A to a Ser of acyl-carrier-protein. The sequence is that of Holo-[acyl-carrier-protein] synthase from Nautilia profundicola (strain ATCC BAA-1463 / DSM 18972 / AmH).